Here is a 494-residue protein sequence, read N- to C-terminus: Potassium voltage-gated channel subfamily A member 2 (494 aa).

The interval 1–25 (MTVATGDPSDEAAAHPGNPAEYDPD) is disordered. Residues 1–124 (MTVATGDPSD…YELGDEAIEL (124 aa)) form a tetramerization domain region. At 1-159 (MTVATGDPSD…LLFEYPESSG (159 aa)) the chain is on the cytoplasmic side. Residues 160–181 (PARIIAIISVMVILISIVSFCL) form a helical membrane-spanning segment. Topologically, residues 182–216 (ETLPIFRNDDDEPHSVFDTNTNTTIYFTSTYFTDP) are extracellular. Residue Asn-203 is glycosylated (N-linked (GlcNAc...) asparagine). A helical membrane pass occupies residues 217–238 (FFILETLCIIWFSFEFLVRLFA). The S-palmitoyl cysteine moiety is linked to residue Cys-239. The Cytoplasmic portion of the chain corresponds to 239–249 (CPSKSGFFGNV). A helical membrane pass occupies residues 250–270 (MNIIDVVAIIPYFITLATELA). Topologically, residues 271–284 (EKPEDGQAGQQAMS) are extracellular. A helical; Voltage-sensor transmembrane segment spans residues 285 to 305 (LAILRVIRLVRVFRIFKLSRH). Residues 306–320 (SKGLQILGQTLKASM) are Cytoplasmic-facing. An S4-S5 linker region spans residues 307-320 (KGLQILGQTLKASM). The helical transmembrane segment at 321-342 (RELGLLIFFLFIGVILFSSAVY) threads the bilayer. Residues 343–356 (FAEADEPESQFESI) are Extracellular-facing. The helical intramembrane region spans 357–368 (PDAFWWAVVSMT). The short motif at 369 to 374 (TVGYGD) is the Selectivity filter element. The stretch at 369–376 (TVGYGDMV) is an intramembrane region. Over 377 to 383 (PTTIGGK) the chain is Extracellular. Residues 384-412 (IVGSLCAIAGVLTIALPVPVIVSNFNYFY) traverse the membrane as a helical segment. Topologically, residues 413–494 (HRETEGEEQA…VNITKMLTDV (82 aa)) are cytoplasmic. The short motif at 492-494 (TDV) is the PDZ-binding element.

The protein belongs to the potassium channel family. A (Shaker) (TC 1.A.1.2) subfamily. Kv1.2/KCNA2 sub-subfamily. As to quaternary structure, homotetramer and heterotetramer with other family members. In terms of tissue distribution, expressed in oligodendrocytes.

It localises to the cell membrane. The enzyme catalyses K(+)(in) = K(+)(out). Its function is as follows. Voltage-gated potassium channel that mediates transmembrane potassium transport in excitable membranes, primarily in the brain and central nervous system. Prevents aberrant action potential firing and regulates neuronal output. Forms tetrameric potassium-selective channels through which potassium ions pass in accordance with their electrochemical gradient. The channel alternates between opened and closed conformations in response to the voltage difference across the membrane. Can form functional homotetrameric channels and heterotetrameric channels with other family members; the channels characteristics depend critically on the types of channel-forming alpha subunits that are present. Channel properties are modulated by cytoplasmic beta subunits that regulate the subcellular location of the alpha subunits. In vivo, membranes probably contain a mixture of heteromeric potassium channel complexes, making it difficult to assign currents observed in intact tissues to any particular potassium channel family member. Homotetrameric KCNA2 forms a delayed-rectifier potassium channel that opens in response to membrane depolarization, followed by slow spontaneous channel closure. Regulates neuronal excitability and plays a role as pacemaker in the regulation of neuronal action potentials. KCNA2-containing channels play a presynaptic role and prevent hyperexcitability and aberrant action potential firing. Response to toxins that are selective for KCNA2-containing potassium channels suggests that in Purkinje cells, dendritic subthreshold KCNA2-containing potassium channels prevent random spontaneous calcium spikes, suppressing dendritic hyperexcitability without hindering the generation of somatic action potentials, and thereby play an important role in motor coordination. Plays a role in the induction of long-term potentiation of neuron excitability in the CA3 layer of the hippocampus. The chain is Potassium voltage-gated channel subfamily A member 2 (kcna2) from Oncorhynchus mykiss (Rainbow trout).